A 471-amino-acid polypeptide reads, in one-letter code: Sulfate adenylyltransferase subunit 1 (471 aa).

A tr-type G domain is found at 24–240 (KSLLRFLTCG…ESADVERELE (217 aa)). The interval 33-40 (GSVDDGKS) is G1. Position 33–40 (33–40 (GSVDDGKS)) interacts with GTP. The segment at 91–95 (GITID) is G2. The G3 stretch occupies residues 112–115 (DTPG). GTP contacts are provided by residues 112-116 (DTPGH) and 167-170 (NKMD). Residues 167 to 170 (NKMD) form a G4 region. The G5 stretch occupies residues 204–206 (SAL).

This sequence belongs to the TRAFAC class translation factor GTPase superfamily. Classic translation factor GTPase family. CysN/NodQ subfamily. As to quaternary structure, heterodimer composed of CysD, the smaller subunit, and CysN.

It catalyses the reaction sulfate + ATP + H(+) = adenosine 5'-phosphosulfate + diphosphate. It functions in the pathway sulfur metabolism; hydrogen sulfide biosynthesis; sulfite from sulfate: step 1/3. With CysD forms the ATP sulfurylase (ATPS) that catalyzes the adenylation of sulfate producing adenosine 5'-phosphosulfate (APS) and diphosphate, the first enzymatic step in sulfur assimilation pathway. APS synthesis involves the formation of a high-energy phosphoric-sulfuric acid anhydride bond driven by GTP hydrolysis by CysN coupled to ATP hydrolysis by CysD. The protein is Sulfate adenylyltransferase subunit 1 of Aeromonas salmonicida (strain A449).